Here is a 283-residue protein sequence, read N- to C-terminus: Elongation factor Ts (283 aa).

The involved in Mg(2+) ion dislocation from EF-Tu stretch occupies residues 79 to 82; sequence TDFV.

The protein belongs to the EF-Ts family.

The protein resides in the cytoplasm. Its function is as follows. Associates with the EF-Tu.GDP complex and induces the exchange of GDP to GTP. It remains bound to the aminoacyl-tRNA.EF-Tu.GTP complex up to the GTP hydrolysis stage on the ribosome. The sequence is that of Elongation factor Ts from Shewanella oneidensis (strain ATCC 700550 / JCM 31522 / CIP 106686 / LMG 19005 / NCIMB 14063 / MR-1).